Consider the following 57-residue polypeptide: UPF0337 protein SCO0678 (57 aa).

Composition is skewed to basic and acidic residues over residues 1-22 (MAGN…KEAA) and 42-57 (GDAR…VFRH). Residues 1–57 (MAGNEKSRAKMEQAKGKAKEAAGRAVGNERMTAEGRAAQSKGDARQAKEKGKDVFRH) form a disordered region.

It belongs to the UPF0337 (CsbD) family.

This Streptomyces coelicolor (strain ATCC BAA-471 / A3(2) / M145) protein is UPF0337 protein SCO0678.